A 402-amino-acid chain; its full sequence is C2H2 finger domain transcription factor CON7 (402 aa).

The tract at residues 1 to 247 (MLASSRQPRH…GAQQHKRPRR (247 aa)) is disordered. 2 stretches are compositionally biased toward polar residues: residues 19 to 49 (LSSS…TSVG) and 72 to 86 (CGDN…TVDT). Residues 87-98 (SSAAQYNASAQQ) are compositionally biased toward low complexity. 2 stretches are compositionally biased toward polar residues: residues 99–116 (EVRS…TPTS) and 125–151 (ARSS…SSGD). The segment at 256–282 (YKCGWQGCEKAYGTLNHLNAHVTMQSH) adopts a C2H2-type zinc-finger fold. Residues 289–323 (EEFKEIRKEWKARKKEEEAARKADEERQRQAAQSQ) adopt a coiled-coil conformation. Basic and acidic residues predominate over residues 302 to 317 (KKEEEAARKADEERQR). The disordered stretch occupies residues 302–402 (KKEEEAARKA…GSNQAMYNQR (101 aa)). 3 stretches are compositionally biased toward polar residues: residues 322 to 341 (SQGG…SSNG), 363 to 373 (AATSTSVQQQP), and 392 to 402 (GGSNQAMYNQR).

The protein localises to the nucleus. Its function is as follows. Transcription factor that plays a central role in appressorium formation and pathogenicity. Required for the expression of a large set of genes including factors that might play a role in membrane metabolism and ergosterol biosynthesis, the chitin-binding protein CBP1,as well as CHS7 that is essential for normal pathogenic development. In Pyricularia oryzae (strain 70-15 / ATCC MYA-4617 / FGSC 8958) (Rice blast fungus), this protein is C2H2 finger domain transcription factor CON7.